The chain runs to 153 residues: Superoxide dismutase [Cu-Zn] (153 aa).

Residue asparagine 24 is glycosylated (N-linked (GlcNAc...) asparagine). Histidine 47, histidine 49, and histidine 64 together coordinate Cu cation. Cysteine 58 and cysteine 147 are disulfide-bonded. Histidine 64, histidine 72, histidine 81, and aspartate 84 together coordinate Zn(2+). Histidine 121 contacts Cu cation. Residues 126–137 (DLGRGGNEESKK) are compositionally biased toward basic and acidic residues. Residues 126-145 (DLGRGGNEESKKTGNAGPRP) are disordered. Residue arginine 144 coordinates substrate.

This sequence belongs to the Cu-Zn superoxide dismutase family. Homodimer. The cofactor is Cu cation. It depends on Zn(2+) as a cofactor.

It localises to the cytoplasm. It carries out the reaction 2 superoxide + 2 H(+) = H2O2 + O2. Its function is as follows. Destroys radicals which are normally produced within the cells and which are toxic to biological systems. In Humicola lutea, this protein is Superoxide dismutase [Cu-Zn].